The sequence spans 504 residues: Hexose transporter 1 (504 aa).

The Cytoplasmic portion of the chain corresponds to 1–29; the sequence is MTKSSKDICSENEGKKNGKSGFFSTSFKY. Residues 30–50 traverse the membrane as a helical segment; the sequence is VLSACIASFIFGYQVSVLNTI. The Extracellular portion of the chain corresponds to 51-78; that stretch reads KNFIVVEFEWCKGEKDRLNCSNNTIQSS. C61 and C70 form a disulfide bridge. Residues 79-99 traverse the membrane as a helical segment; that stretch reads FLLASVFIGAVLGCGFSGYLV. Topologically, residues 100 to 104 are cytoplasmic; it reads QFGRR. The chain crosses the membrane as a helical span at residues 105 to 125; sequence LSLLIIYNFFFLVSILTSITH. Residues 126–129 are Extracellular-facing; that stretch reads HFHT. A helical membrane pass occupies residues 130-150; the sequence is ILFARLLSGFGIGLVTVSVPM. At 151 to 165 the chain is on the cytoplasmic side; sequence YISEMTHKDKKGAYG. A helical membrane pass occupies residues 166-186; the sequence is VMHQLFITFGIFVAVMLGLAM. Q169 provides a ligand contact to alpha-D-glucose. Q169 lines the beta-D-glucose pocket. At 187–207 the chain is on the extracellular side; it reads GEGPKADSTEPLTSFAKLWWR. A helical transmembrane segment spans residues 208-228; that stretch reads LMFLFPSVISLIGILALVVFF. The Cytoplasmic segment spans residues 229–293; that stretch reads KEETPYFLFE…SALKIPSYRY (65 aa). A helical membrane pass occupies residues 294 to 314; that stretch reads VIILGCLLSGLQQFTGINVLV. Residues Q305, Q306, and N311 each coordinate alpha-D-glucose. Q305 provides a ligand contact to beta-D-glucose. Residue N311 coordinates beta-D-glucose. The Extracellular portion of the chain corresponds to 315 to 331; that stretch reads SNSNELYKEFLDSHLIT. The helical transmembrane segment at 332–352 threads the bilayer; it reads ILSVVMTAVNFLMTFPAIYIV. Beta-D-glucose is bound at residue N341. The Cytoplasmic portion of the chain corresponds to 353–358; the sequence is EKLGRK. A helical transmembrane segment spans residues 359–379; the sequence is TLLLWGCVGVLVAYLPTAIAN. The Extracellular portion of the chain corresponds to 380–392; sequence EINRNSNFVKILS. A helical membrane pass occupies residues 393–413; it reads IVATFVMIISFAVSYGPVLWI. W412 is a binding site for alpha-D-glucose. Topologically, residues 414-429 are cytoplasmic; sequence YLHEMFPSEIKDSAAS. The helical transmembrane segment at 430–450 threads the bilayer; sequence LASLVNWVCAIIVVFPSDIII. Residues 451–455 are Extracellular-facing; sequence KKSPS. Residues 456–476 form a helical membrane-spanning segment; it reads ILFIVFSVMSILTFFFIFFFI. At 477-504 the chain is on the cytoplasmic side; sequence KETKGGEIGTSPYITMEERQKHMTKSVV.

This sequence belongs to the major facilitator superfamily. Sugar transporter (TC 2.A.1.1) family. As to quaternary structure, homodimer.

The protein resides in the cell membrane. The catalysed reaction is D-glucose(out) = D-glucose(in). The enzyme catalyses D-fructose(out) = D-fructose(in). It catalyses the reaction D-galactose(in) = D-galactose(out). It carries out the reaction D-mannose(out) = D-mannose(in). The catalysed reaction is D-glucosamine(out) = D-glucosamine(in). The enzyme catalyses D-xylose(out) = D-xylose(in). Its activity is regulated as follows. Inhibited by cytochalasin B. Inhibited by compound 3361 (3-O-((undec-10-en)-1-yl)-D-glucose). Inhibited by compound HTI-1. Sodium-independent facilitative hexose transporter. Can transport D-glucose and D-fructose. Can transport D-mannose, D-galactose, D-xylose and D-glucosamine. This Plasmodium falciparum (isolate 3D7) protein is Hexose transporter 1.